We begin with the raw amino-acid sequence, 118 residues long: NADH-quinone oxidoreductase subunit A (118 aa).

Transmembrane regions (helical) follow at residues 6–26 (LPVL…LLMG), 64–84 (AILF…AVVF), and 87–107 (IGMT…VGFI).

The protein belongs to the complex I subunit 3 family. NDH-1 is composed of 14 different subunits. Subunits NuoA, H, J, K, L, M, N constitute the membrane sector of the complex.

The protein localises to the cell inner membrane. The catalysed reaction is a quinone + NADH + 5 H(+)(in) = a quinol + NAD(+) + 4 H(+)(out). NDH-1 shuttles electrons from NADH, via FMN and iron-sulfur (Fe-S) centers, to quinones in the respiratory chain. The immediate electron acceptor for the enzyme in this species is believed to be ubiquinone. Couples the redox reaction to proton translocation (for every two electrons transferred, four hydrogen ions are translocated across the cytoplasmic membrane), and thus conserves the redox energy in a proton gradient. The chain is NADH-quinone oxidoreductase subunit A from Acidithiobacillus ferrooxidans (strain ATCC 53993 / BNL-5-31) (Leptospirillum ferrooxidans (ATCC 53993)).